We begin with the raw amino-acid sequence, 83 residues long: Bublin coiled-coil protein (83 aa).

The interval M1–E25 is disordered. The stretch at E25–L74 forms a coiled coil. Position 82 is a phosphoserine (S82).

This sequence belongs to the UPF0184 (EST00098) family.

It localises to the cell junction. Its subcellular location is the cytoplasm. It is found in the cytoskeleton. Functionally, essential for intermediate filament organization in intestinal cells, interacts with intermediate filament and regulates intestinal lumen morphology. The protein is Bublin coiled-coil protein (BBLN) of Bos taurus (Bovine).